The primary structure comprises 498 residues: uncharacterized protein (498 aa).

The signal sequence occupies residues Met-1–Ala-26. At Ala-27–Ala-441 the chain is on the extracellular side. N-linked (GlcNAc...) asparagine glycans are attached at residues Asn-44, Asn-150, Asn-354, and Asn-357. Residues Gly-351–Asn-439 form a disordered region. Positions Ser-362–Gly-414 are enriched in gly residues. Residues Ala-418–Ser-436 are compositionally biased toward basic and acidic residues. A helical transmembrane segment spans residues Leu-442–Trp-462. Residues Lys-463–Gln-498 are Cytoplasmic-facing.

The protein resides in the membrane. This is an uncharacterized protein from Arabidopsis thaliana (Mouse-ear cress).